The following is a 248-amino-acid chain: UPF0651 protein YPL107W, mitochondrial (248 aa).

Residues 1-26 (MIRNQGWSLLYRIYPVRRFTRYSRVD) constitute a mitochondrion transit peptide. Positions 69–116 (KKIAGVQVPAKPQEPDNCCMSGCVNCVWEIYSEDLRDWKHRRKEAAEK) constitute an Oxidoreductase-like domain.

This sequence belongs to the UPF0651 family.

It localises to the mitochondrion. The sequence is that of UPF0651 protein YPL107W, mitochondrial from Saccharomyces cerevisiae (strain ATCC 204508 / S288c) (Baker's yeast).